Reading from the N-terminus, the 205-residue chain is Probable thymidylate kinase (205 aa).

7–14 (GIDGAGKS) is an ATP binding site.

The protein belongs to the thymidylate kinase family.

The catalysed reaction is dTMP + ATP = dTDP + ADP. The protein is Probable thymidylate kinase of Thermococcus onnurineus (strain NA1).